The primary structure comprises 96 residues: Pore-forming peptide amoebapore B (96 aa).

The first 19 residues, 1-19 (MRAIIFVLIFAIAFAATRE), serve as a signal peptide directing secretion. The Saposin B-type domain maps to 20–96 (GAILCNLCKD…VVVCEKIHAC (77 aa)). 3 cysteine pairs are disulfide-bonded: C24–C96, C27–C90, and C54–C65.

As to quaternary structure, monomer. Homodimer. Hexamer; formed during insertion in the membrane.

The protein localises to the cytoplasmic granule. In terms of biological role, forms pores in the cell membrane of host cells. Has antibacterial activity against M.luteus, no activity against E.coli. Implicated in the cytolytic activity of the parasite. The sequence is that of Pore-forming peptide amoebapore B from Entamoeba histolytica (strain ATCC 30459 / HM-1:IMSS / ABRM).